A 2145-amino-acid polypeptide reads, in one-letter code: U5 small nuclear ribonucleoprotein 200 kDa helicase (2145 aa).

Disordered regions lie at residues 54–82 (GDRA…AQQF) and 202–243 (DSDE…GDGH). Acidic residues predominate over residues 220–231 (SEEESEEEEGVD). Residues 484–667 (DSALRSKEHL…FLRVKPEHLH (184 aa)) enclose the Helicase ATP-binding 1 domain. 497-504 (APTGAGKT) is an ATP binding site. The short motif at 609–612 (DEIH) is the DEAH box element. Residues 677–894 (PLEQQYIGVT…QMVSRLTDML (218 aa)) enclose the Helicase C-terminal domain. The 304-residue stretch at 975–1278 (TELGRIASHF…IGAETVLPIS (304 aa)) folds into the SEC63 1 domain. Residues 1331-1506 (RTVFESNENV…WLGCSASATF (176 aa)) enclose the Helicase ATP-binding 2 domain. Residue 1344-1351 (APNGSGKT) coordinates ATP. The DEAH box motif lies at 1448 to 1451 (DDLH). The SEC63 2 domain occupies 1812-2124 (LNLGMIASYY…YLGADQEFDV (313 aa)).

Belongs to the helicase family. SKI2 subfamily.

It is found in the nucleus. It carries out the reaction ATP + H2O = ADP + phosphate + H(+). Catalyzes the ATP-dependent unwinding of U4/U6 RNA duplices, an essential step in the assembly of a catalytically active spliceosome. Plays a role in pre-mRNA splicing. The protein is U5 small nuclear ribonucleoprotein 200 kDa helicase of Caenorhabditis elegans.